The sequence spans 231 residues: Translin-associated protein X homolog (231 aa).

This sequence belongs to the translin family.

The protein resides in the cytoplasm. It is found in the nucleus. In Schizosaccharomyces pombe (strain 972 / ATCC 24843) (Fission yeast), this protein is Translin-associated protein X homolog.